The primary structure comprises 969 residues: Protein translocase subunit SecA (969 aa).

Residues Gln99, 117–121 (GEGKT), and Asp631 each bind ATP.

Belongs to the SecA family. In terms of assembly, monomer and homodimer. Part of the essential Sec protein translocation apparatus which comprises SecA, SecYEG and auxiliary proteins SecDF. Other proteins may also be involved.

Its subcellular location is the cell inner membrane. The protein localises to the cytoplasm. The catalysed reaction is ATP + H2O + cellular proteinSide 1 = ADP + phosphate + cellular proteinSide 2.. Part of the Sec protein translocase complex. Interacts with the SecYEG preprotein conducting channel. Has a central role in coupling the hydrolysis of ATP to the transfer of proteins into and across the cell membrane, serving as an ATP-driven molecular motor driving the stepwise translocation of polypeptide chains across the membrane. The polypeptide is Protein translocase subunit SecA (Chlamydia abortus (strain DSM 27085 / S26/3) (Chlamydophila abortus)).